The chain runs to 246 residues: NAD-dependent protein deacylase (246 aa).

Positions 1–246 (MDLSQARAAL…RGLELLLEDD (246 aa)) constitute a Deacetylase sirtuin-type domain. 21–41 (GAGISAESGIPTFRDAQTGHW) is an NAD(+) binding site. Residues Tyr-66 and Arg-69 each coordinate substrate. NAD(+) is bound at residue 101–104 (QNVD). Catalysis depends on His-123, which acts as the Proton acceptor. NAD(+) contacts are provided by residues 191 to 193 (GTS), 217 to 219 (NPE), and Ala-235.

Belongs to the sirtuin family. Class III subfamily.

Its subcellular location is the cytoplasm. The enzyme catalyses N(6)-acetyl-L-lysyl-[protein] + NAD(+) + H2O = 2''-O-acetyl-ADP-D-ribose + nicotinamide + L-lysyl-[protein]. The catalysed reaction is N(6)-succinyl-L-lysyl-[protein] + NAD(+) + H2O = 2''-O-succinyl-ADP-D-ribose + nicotinamide + L-lysyl-[protein]. Functionally, NAD-dependent lysine deacetylase and desuccinylase that specifically removes acetyl and succinyl groups on target proteins. Modulates the activities of several proteins which are inactive in their acylated form. In Deinococcus radiodurans (strain ATCC 13939 / DSM 20539 / JCM 16871 / CCUG 27074 / LMG 4051 / NBRC 15346 / NCIMB 9279 / VKM B-1422 / R1), this protein is NAD-dependent protein deacylase.